The following is a 635-amino-acid chain: 4-hydroxy-3-methylbut-2-enyl diphosphate reductase (635 aa).

Positions 1–279 are 4-hydroxy-3-methylbut-2-enyl diphosphate reductase; sequence MSIILAKKSG…KEAIFKMSNK (279 aa). Position 12 (Cys12) interacts with [4Fe-4S] cluster. His42 and His77 together coordinate (2E)-4-hydroxy-3-methylbut-2-enyl diphosphate. Dimethylallyl diphosphate-binding residues include His42 and His77. Isopentenyl diphosphate-binding residues include His42 and His77. A [4Fe-4S] cluster-binding site is contributed by Cys99. His127 contributes to the (2E)-4-hydroxy-3-methylbut-2-enyl diphosphate binding site. His127 provides a ligand contact to dimethylallyl diphosphate. His127 is a binding site for isopentenyl diphosphate. Glu129 serves as the catalytic Proton donor. Position 163 (Thr163) interacts with (2E)-4-hydroxy-3-methylbut-2-enyl diphosphate. Cys191 lines the [4Fe-4S] cluster pocket. (2E)-4-hydroxy-3-methylbut-2-enyl diphosphate-binding residues include Ser219, Ser220, Asn221, and Ser263. Dimethylallyl diphosphate-binding residues include Ser219, Ser220, Asn221, and Ser263. Ser219, Ser220, Asn221, and Ser263 together coordinate isopentenyl diphosphate. S1 motif domains are found at residues 298-373, 380-455, 476-544, and 561-630; these read GQEV…LNRE, KEAF…ASRR, DTIK…LSIK, and GNIV…LSIK.

The protein in the N-terminal section; belongs to the IspH family. Requires [4Fe-4S] cluster as cofactor.

It catalyses the reaction isopentenyl diphosphate + 2 oxidized [2Fe-2S]-[ferredoxin] + H2O = (2E)-4-hydroxy-3-methylbut-2-enyl diphosphate + 2 reduced [2Fe-2S]-[ferredoxin] + 2 H(+). The catalysed reaction is dimethylallyl diphosphate + 2 oxidized [2Fe-2S]-[ferredoxin] + H2O = (2E)-4-hydroxy-3-methylbut-2-enyl diphosphate + 2 reduced [2Fe-2S]-[ferredoxin] + 2 H(+). It functions in the pathway isoprenoid biosynthesis; dimethylallyl diphosphate biosynthesis; dimethylallyl diphosphate from (2E)-4-hydroxy-3-methylbutenyl diphosphate: step 1/1. The protein operates within isoprenoid biosynthesis; isopentenyl diphosphate biosynthesis via DXP pathway; isopentenyl diphosphate from 1-deoxy-D-xylulose 5-phosphate: step 6/6. Catalyzes the conversion of 1-hydroxy-2-methyl-2-(E)-butenyl 4-diphosphate (HMBPP) into a mixture of isopentenyl diphosphate (IPP) and dimethylallyl diphosphate (DMAPP). Acts in the terminal step of the DOXP/MEP pathway for isoprenoid precursor biosynthesis. The protein is 4-hydroxy-3-methylbut-2-enyl diphosphate reductase of Clostridium tetani (strain Massachusetts / E88).